We begin with the raw amino-acid sequence, 146 residues long: Meiotically up-regulated gene 151 protein (146 aa).

The interval 1–40 is disordered; it reads MSLVAYDSEEEEQTSLVNENNDIKGRSEEPHWKIPNSPKA. The span at 21 to 32 shows a compositional bias: basic and acidic residues; the sequence is NDIKGRSEEPHW.

The protein localises to the nucleus. Its function is as follows. Has a role in meiosis. This Schizosaccharomyces pombe (strain 972 / ATCC 24843) (Fission yeast) protein is Meiotically up-regulated gene 151 protein (mug151).